A 214-amino-acid polypeptide reads, in one-letter code: Cdc42 effector protein 2 (214 aa).

S2 is modified (N-acetylserine). One can recognise a CRIB domain in the interval 30 to 44; the sequence is ISPPLGDFRHTIHIG. Phosphoserine occurs at positions 31, 101, 137, 141, and 145. Residues 118–151 form a disordered region; the sequence is ALTLPTTQAPPKPPRLHLESPQPSPKSSPQEAGN.

It belongs to the BORG/CEP family. As to quaternary structure, interacts with CDC42 and RHOQ, in a GTP-dependent manner, and with SEPT7.

The protein resides in the endomembrane system. It is found in the cytoplasm. Its subcellular location is the cytoskeleton. Its function is as follows. Probably involved in the organization of the actin cytoskeleton. May act downstream of CDC42 to induce actin filament assembly leading to cell shape changes. Induces pseudopodia formation in fibroblasts in a CDC42-dependent manner. The protein is Cdc42 effector protein 2 (Cdc42ep2) of Rattus norvegicus (Rat).